Here is a 328-residue protein sequence, read N- to C-terminus: RNA-binding protein KhpB (328 aa).

The tract at residues 3–53 (VFTGSTVEEAIQKGLKELDIPRMKAHIKVISREKKGFLGLFGKKPAQVDIE) is jag_N domain. The linker stretch occupies residues 54 to 180 (AISETTVVKA…GLKVETNFDI (127 aa)). A Phosphothreonine modification is found at Thr89. The region spanning 181–258 (EQVATEVMAY…SRTFYVTINV (78 aa)) is the KH domain. In terms of domain architecture, R3H spans 263–328 (EHRAEVLQTY…PNRYVVVDTE (66 aa)).

The protein belongs to the KhpB RNA-binding protein family. Interacts with KhpA; the 2 proteins colocalize throughout the cell cycle, with some increase at midcell in dividing cells. Interacts with StkP which phosphorylates it, interacts with MltG, MreC, RodZ and YidC2. Phosphorylated on Thr-89 by StkP; there is another poorly phosphorylated residue in the protein. Dephosphorylated by PhpP.

It is found in the cytoplasm. Its function is as follows. A probable RNA chaperone. Forms a complex with KhpA which binds to cellular RNA and controls its expression. Plays a role in peptidoglycan (PG) homeostasis and cell length regulation. In terms of biological role, forms a complex with KhpA which presumably binds to about 170 cellular RNAs (mRNA, tRNA intergenic RNA and sRNAs); the proteins alone each bind the same set of RNAs. Suppresses the requirement for PBP2b (penA, a transpeptidase) in peripheral peptidoglycan (PG) synthesis. May function as a pleiotropic RNA chaperone controlling pneumococcal cell division, including PG homeostasis and regulating peripheral PG synthesis by the elongasome. This is RNA-binding protein KhpB from Streptococcus pneumoniae serotype 2 (strain D39 / NCTC 7466).